Consider the following 1357-residue polypeptide: MAYSYTEKKRIRKDFSKLPDVMDVPYLLAIQLDSYREFLQAGATKDQFRDVGLHAAFKSVFPIISYSGNAALEYVGYRLGEPAFDVKECVLRGVTYAVPLRVKVRLIIFDKESSNKAIKDIKEQEVYMGEIPLMTENGTFVINGTERVIVSQLHRSPGVFFDHDRGKTHSSGKLLYSARIIPYRGSWLDFEFDPKDCVFVRIDRRRKLPASVLLRALGYTTEQVLDAFYTTNVFHVRGENLSLELVPQRLRGEIAVLDILDDKGKVIVEQGRRITARHINQLEKAGIKELEVPLDYVLGRTTAKVIVHPATGEIIAECNTELNTEILAKIAKAQVVRIETLYTNDIDCGPFVSDTLKIDSTSNQLEALVEIYRMMRPGEPPTKDAAETLFNNLFFSPERYDLSAVGRMKFNRRIGRTEIEGSGVLCKEDIVAVLKTLVDIRNGKGIVDDIDHLGNRRVRCVGEMAENQFRVGLVRVERAVKERLSMAESEGLMPQDLINAKPVAAAVKEFFGSSQLSQFMDQNNPLSEITLKRRVSALGPGGLTRERAGFEVRDVHPTHYGRVCPIETPEGPNIGLINSLAAYARTNQYGFLESPYRVVKEGLVTEEIVFLSAIEEADHVIAQASAAMNDKQELIDELVAVRHLNEFTVKAPADVTLMDVSPKQVVSVAASLIPFLEHDDANRALMGSNMQRQAVPTLRADKPLVGTGMERNVARDSGVCVVARRGGVIDSVDASRIVVRVADDEVETGEAGVDIYNLTKYTRSNQNTCINQRPLVSKGDRVQRSDIMADGPSTDMGELALGQNMRIAFMAWNGFNFEDSICLSERVVQEDRFTTIHIQELTCVARDTKLGPEEITADIPNVGEAALNKLDEAGIVYVGAEVGAGDILVGKVTPKGETQLTPEEKLLRAIFGEKASDVKDTSLRVPTGTKGTVIDVQVFTRDGVERDARALSIEKSQLDEIRKDLNEEFRIVEGATFERLRSALVGRVAEGGAGLKKGQEITNEVLDGLEHGQWFKLRMAEDALNEQLEKAQAYIVDRRRLLDDKFEDKKRKLQQGDDLAPGVLKIVKVYLAIRRRIQPGDKMAGRHGNKGVVSVIMPVEDMPHDANGTPVDIVLNPLGVPSRMNVGQILETHLGLAAKGLGEKINRMLEEQRKVAELRKFLNEIYNEIGGRQESLEDLTDNEILDLAKNLRNGVPMATPVFDGAKESEIKAMLKLADMPESGQMQLFDGRTGNKFERAVTVGYMYMLKLNHLVDDKMHARSTGSYSLVTQQPLGGKAQFGGQRFGEMEVWALEAYGAAYTLQEMLTVKSDDVNGRTKMYKNIVDGDHRMEPGMPESFNVLIKEIRSLGIDIDLETE.

The protein belongs to the RNA polymerase beta chain family. The RNAP catalytic core consists of 2 alpha, 1 beta, 1 beta' and 1 omega subunit. When a sigma factor is associated with the core the holoenzyme is formed, which can initiate transcription.

It catalyses the reaction RNA(n) + a ribonucleoside 5'-triphosphate = RNA(n+1) + diphosphate. In terms of biological role, DNA-dependent RNA polymerase catalyzes the transcription of DNA into RNA using the four ribonucleoside triphosphates as substrates. The protein is DNA-directed RNA polymerase subunit beta of Pseudomonas savastanoi pv. phaseolicola (strain 1448A / Race 6) (Pseudomonas syringae pv. phaseolicola (strain 1448A / Race 6)).